The primary structure comprises 341 residues: METKDLKKLAKAELHCHLDGSLSLDTIRQLAALAQVDVPQDDSELKQLVTAPETCGSLMDYLKTFDFIRPLLQTPQALTLAAYDVVKQAALENVIYIEIRFAPELSMDQGLTATQVVEAVLKGLEQGQKEFGIVAKAIVCGMRQSSLDISREIFANVLEWANKGLVGFDFAGNELDFPPAVLADLIKETQAYGLPFTLHAGECGCPNYIVDAIDLGIKRLGHVTAIHNQKDLLAKFIANDVTAELCFTSNLQTKAARTVEDFPYMQLRQAGAKLSINTDNRTVSDTNLTKEYELFVKHFETSVSDFLEHNRDAIKASFTSPAEKEALLARLDKAYQSYIKK.

Residues His15 and His17 each coordinate Zn(2+). His17, Asp19, and Gly172 together coordinate substrate. His199 lines the Zn(2+) pocket. The Proton donor role is filled by Glu202. Asp279 is a binding site for Zn(2+).

Belongs to the metallo-dependent hydrolases superfamily. Adenosine and AMP deaminases family. Adenosine deaminase subfamily. Zn(2+) is required as a cofactor.

It carries out the reaction adenosine + H2O + H(+) = inosine + NH4(+). The enzyme catalyses 2'-deoxyadenosine + H2O + H(+) = 2'-deoxyinosine + NH4(+). Catalyzes the hydrolytic deamination of adenosine and 2-deoxyadenosine. The sequence is that of Adenosine deaminase from Streptococcus equi subsp. zooepidemicus (strain MGCS10565).